The primary structure comprises 734 residues: Threonine--tRNA ligase, cytoplasmic (734 aa).

The tract at residues 1 to 41 (MSASEAGVTEQVKKLSVKDSSNDAVKPNKKENKKSKQQSLY) is disordered. Over residues 11-30 (QVKKLSVKDSSNDAVKPNKK) the composition is skewed to basic and acidic residues. The region spanning 69–135 (SMPRVPLKIV…EGEANEEIKL (67 aa)) is the TGS domain. Residues S195 and S289 each carry the phosphoserine modification. Phosphothreonine occurs at positions 297 and 381. Residues S453 and S457 each carry the phosphoserine modification. T460 carries the post-translational modification Phosphothreonine. S605 carries the phosphoserine modification.

Belongs to the class-II aminoacyl-tRNA synthetase family.

The protein localises to the cytoplasm. The catalysed reaction is tRNA(Thr) + L-threonine + ATP = L-threonyl-tRNA(Thr) + AMP + diphosphate + H(+). This chain is Threonine--tRNA ligase, cytoplasmic (THS1), found in Saccharomyces cerevisiae (strain ATCC 204508 / S288c) (Baker's yeast).